The chain runs to 585 residues: Arginine--tRNA ligase (585 aa).

A 'HIGH' region motif is present at residues 131-141; that stretch reads ANPTGPMHVGH.

The protein belongs to the class-I aminoacyl-tRNA synthetase family. In terms of assembly, monomer.

It localises to the cytoplasm. The catalysed reaction is tRNA(Arg) + L-arginine + ATP = L-arginyl-tRNA(Arg) + AMP + diphosphate. The chain is Arginine--tRNA ligase from Sinorhizobium medicae (strain WSM419) (Ensifer medicae).